A 720-amino-acid chain; its full sequence is DNA ligase (720 aa).

NAD(+) is bound by residues 60–64 (DYDYD), 109–110 (SL), and Glu-140. The N6-AMP-lysine intermediate role is filled by Lys-142. Positions 163 and 201 each coordinate NAD(+). The interval 220 to 239 (GLPPFANPRNAAAGSIRQKD) is disordered. Residues Lys-320 and Lys-344 each coordinate NAD(+). Zn(2+) is bound by residues Cys-438, Cys-441, Cys-456, and Cys-461. Residues 619–709 (KVADVLKGKT…VDLEKIKKED (91 aa)) form the BRCT domain.

It belongs to the NAD-dependent DNA ligase family. LigA subfamily. Mn(2+) serves as cofactor. The cofactor is Mg(2+).

It catalyses the reaction NAD(+) + (deoxyribonucleotide)n-3'-hydroxyl + 5'-phospho-(deoxyribonucleotide)m = (deoxyribonucleotide)n+m + AMP + beta-nicotinamide D-nucleotide.. Functionally, DNA ligase that catalyzes the formation of phosphodiester linkages between 5'-phosphoryl and 3'-hydroxyl groups in double-stranded DNA using NAD as a coenzyme and as the energy source for the reaction. It is essential for DNA replication and repair of damaged DNA. This chain is DNA ligase, found in Aquifex aeolicus (strain VF5).